A 131-amino-acid polypeptide reads, in one-letter code: Protein Turandot M (131 aa).

The signal sequence occupies residues 1–23 (MNPTVYLSCLVVFSLFYLGKAQA).

The protein belongs to the Turandot family.

It is found in the secreted. Functionally, a humoral factor that may play a role in stress tolerance. Requires Mekk1 expression in the fat body to regulate response to septic injury and consequent immune response. This chain is Protein Turandot M, found in Drosophila yakuba (Fruit fly).